The chain runs to 327 residues: Phenylalanine--tRNA ligase alpha subunit (327 aa).

Residue glutamate 252 participates in Mg(2+) binding.

The protein belongs to the class-II aminoacyl-tRNA synthetase family. Phe-tRNA synthetase alpha subunit type 1 subfamily. As to quaternary structure, tetramer of two alpha and two beta subunits. Mg(2+) serves as cofactor.

The protein localises to the cytoplasm. The enzyme catalyses tRNA(Phe) + L-phenylalanine + ATP = L-phenylalanyl-tRNA(Phe) + AMP + diphosphate + H(+). This Yersinia pestis bv. Antiqua (strain Antiqua) protein is Phenylalanine--tRNA ligase alpha subunit.